Consider the following 49-residue polypeptide: Large ribosomal subunit protein bL33C (49 aa).

The protein belongs to the bacterial ribosomal protein bL33 family.

This Lactococcus lactis subsp. cremoris (strain MG1363) protein is Large ribosomal subunit protein bL33C.